Here is a 427-residue protein sequence, read N- to C-terminus: DEAD-box ATP-dependent RNA helicase 56 (427 aa).

A disordered region spans residues 1 to 30 (MGDARDNEAYEEELLDYEEEDEKVPDSGNK). Acidic residues predominate over residues 9–23 (AYEEELLDYEEEDEK). A Q motif motif is present at residues 46-74 (SGFRDFLLKPELLRAIVDSGFEHPSEVQH). The 174-residue stretch at 77–250 (IPQAILGMDV…KKFMQDPMEI (174 aa)) folds into the Helicase ATP-binding domain. 90-97 (AKSGMGKT) contributes to the ATP binding site. The DECD box motif lies at 197–200 (DECD). One can recognise a Helicase C-terminal domain in the interval 278–423 (KLNDLLDALD…ELPEQIDTST (146 aa)).

The protein belongs to the DEAD box helicase family. DECD subfamily. Interacts with ALY2 and MOS11.

The protein resides in the nucleus. The catalysed reaction is ATP + H2O = ADP + phosphate + H(+). ATP-dependent RNA helicase involved in pre-mRNA splicing. Required for the export of mRNA out of the nucleus. In addition to ssRNA and dsRNA, binds dsDNA, but not ssDNA. This chain is DEAD-box ATP-dependent RNA helicase 56 (RH56), found in Arabidopsis thaliana (Mouse-ear cress).